The chain runs to 103 residues: Small ribosomal subunit protein uS10 (103 aa).

Belongs to the universal ribosomal protein uS10 family. As to quaternary structure, part of the 30S ribosomal subunit.

Its function is as follows. Involved in the binding of tRNA to the ribosomes. The chain is Small ribosomal subunit protein uS10 from Actinobacillus pleuropneumoniae serotype 5b (strain L20).